Reading from the N-terminus, the 214-residue chain is Holliday junction branch migration complex subunit RuvA (214 aa).

A domain I region spans residues 1–68 (MIGFLQGKVL…QPKPVLIGFD (68 aa)). The interval 69–146 (SAEEKDFFQL…RFLLAADEAG (78 aa)) is domain II. The segment at 147 to 160 (AGDGVSKTGTPSLP) is flexible linker. A domain III region spans residues 161-214 (IQKAIDQVVDVLVQQLGHTPSAAKMMVAQALDRDPEIMTPEALFDEVYKGDVDA).

Belongs to the RuvA family. As to quaternary structure, homotetramer. Forms an RuvA(8)-RuvB(12)-Holliday junction (HJ) complex. HJ DNA is sandwiched between 2 RuvA tetramers; dsDNA enters through RuvA and exits via RuvB. An RuvB hexamer assembles on each DNA strand where it exits the tetramer. Each RuvB hexamer is contacted by two RuvA subunits (via domain III) on 2 adjacent RuvB subunits; this complex drives branch migration. In the full resolvosome a probable DNA-RuvA(4)-RuvB(12)-RuvC(2) complex forms which resolves the HJ.

The protein resides in the cytoplasm. In terms of biological role, the RuvA-RuvB-RuvC complex processes Holliday junction (HJ) DNA during genetic recombination and DNA repair, while the RuvA-RuvB complex plays an important role in the rescue of blocked DNA replication forks via replication fork reversal (RFR). RuvA specifically binds to HJ cruciform DNA, conferring on it an open structure. The RuvB hexamer acts as an ATP-dependent pump, pulling dsDNA into and through the RuvAB complex. HJ branch migration allows RuvC to scan DNA until it finds its consensus sequence, where it cleaves and resolves the cruciform DNA. This chain is Holliday junction branch migration complex subunit RuvA, found in Desulforapulum autotrophicum (strain ATCC 43914 / DSM 3382 / VKM B-1955 / HRM2) (Desulfobacterium autotrophicum).